The sequence spans 141 residues: Hemoglobin subunit alpha-A (141 aa).

The 141-residue stretch at 1 to 141 (VLNAGDKANV…VGTVLTSKYR (141 aa)) folds into the Globin domain. His58 lines the O2 pocket. His87 serves as a coordination point for heme b.

Belongs to the globin family. Heterotetramer of two alpha chains and two beta chains. In terms of tissue distribution, red blood cells.

Its function is as follows. Involved in oxygen transport from the lung to the various peripheral tissues. The polypeptide is Hemoglobin subunit alpha-A (HBAA) (Chrysemys picta bellii (Western painted turtle)).